The sequence spans 424 residues: Proline--tRNA ligase (424 aa).

It belongs to the class-II aminoacyl-tRNA synthetase family. ProS type 2 subfamily. As to quaternary structure, homodimer.

It is found in the cytoplasm. It catalyses the reaction tRNA(Pro) + L-proline + ATP = L-prolyl-tRNA(Pro) + AMP + diphosphate. Functionally, catalyzes the attachment of proline to tRNA(Pro) in a two-step reaction: proline is first activated by ATP to form Pro-AMP and then transferred to the acceptor end of tRNA(Pro). In Ehrlichia canis (strain Jake), this protein is Proline--tRNA ligase.